Here is a 733-residue protein sequence, read N- to C-terminus: Catalase-peroxidase (733 aa).

A disordered region spans residues Met1–His25. The span at Pro16–His25 shows a compositional bias: basic and acidic residues. Residues Trp96–Tyr219 constitute a cross-link (tryptophyl-tyrosyl-methioninium (Trp-Tyr) (with M-245)). His97 functions as the Proton acceptor in the catalytic mechanism. A cross-link (tryptophyl-tyrosyl-methioninium (Tyr-Met) (with W-96)) is located at residues Tyr219 to Met245. A heme b-binding site is contributed by His260.

The protein belongs to the peroxidase family. Peroxidase/catalase subfamily. As to quaternary structure, homodimer or homotetramer. The cofactor is heme b. Post-translationally, formation of the three residue Trp-Tyr-Met cross-link is important for the catalase, but not the peroxidase activity of the enzyme.

It carries out the reaction H2O2 + AH2 = A + 2 H2O. The catalysed reaction is 2 H2O2 = O2 + 2 H2O. Its function is as follows. Bifunctional enzyme with both catalase and broad-spectrum peroxidase activity. The chain is Catalase-peroxidase from Chlorobium chlorochromatii (strain CaD3).